The chain runs to 135 residues: MLLLRWFTSCCLWVFGLGQLEQTELSVTRETDENVQISCIVYLPYFSNTAIHWYRQKTNQQFEYLIYVATNYNQRPLGGKHKKIEASKDFKSSTSTLEINYLKKEDEATYYCAVWMRWSSGFHKVFAEGTKLIVI.

An N-terminal signal peptide occupies residues Met-1–Gly-18. The v segment stretch occupies residues Gln-19 to Met-116. A j segment region spans residues Arg-117–Ile-135.

The polypeptide is T-cell receptor gamma chain V region V108A (Mus musculus (Mouse)).